The primary structure comprises 137 residues: MSFLKEFREFAMRGNVVDLAVGVIIGAAFGKIVSSLVADIIMPPLGLLIGGIDFKQFAVTLRDAQGDVPAVVMHYGVFIQNVFDFIIVAFAIFMAIKLMNKLNRKKEEAPAAPPAPSKEEVLLSEIRDLLKEQNNRS.

2 consecutive transmembrane segments (helical) span residues 10-30 and 76-96; these read FAMR…AAFG and GVFI…FMAI.

It belongs to the MscL family. As to quaternary structure, homopentamer.

It localises to the cell inner membrane. Channel that opens in response to stretch forces in the membrane lipid bilayer. May participate in the regulation of osmotic pressure changes within the cell. The chain is Large-conductance mechanosensitive channel from Klebsiella pneumoniae subsp. pneumoniae (strain ATCC 700721 / MGH 78578).